Consider the following 312-residue polypeptide: MNILTDPNKLKTSGCADVNASKCAEGDGEGSVQVQLDPNLNIGTAKVFSIYGKGGIGKSTTSSNLSVAFSKLGKRVLQIGCDPKHDSTFTLTKKLMPTVIDVLESVNFHSEEVRPEDFVFEGYNGVMCVEAGGPPAGTGCGGYVVGQTVKLLKEHHLLEDTDVVIFDVLGDVVCGGFASPLQHSERAMIVAANDFDSIFAANRIAAAIQAKSKNYAVRLAGVIANRSRETDQIDKFGERTGIKRVAHLPDLDVIRKSRLKKMTLFEMDHTPEIEAVQNEYLRLATELWEAKEPPVQGKPLKDRDIFDLLGFD.

ATP is bound by residues 55–60 and lysine 84; that span reads GIGKST. Position 59 (serine 59) interacts with Mg(2+). Positions 140 and 174 each coordinate [4Fe-4S] cluster. Residues 225-226 and 249-251 contribute to the ATP site; these read NR and PDL.

This sequence belongs to the NifH/BchL/ChlL family. Homodimer. Protochlorophyllide reductase is composed of three subunits; BchL, BchN and BchB. [4Fe-4S] cluster is required as a cofactor.

The catalysed reaction is chlorophyllide a + oxidized 2[4Fe-4S]-[ferredoxin] + 2 ADP + 2 phosphate = protochlorophyllide a + reduced 2[4Fe-4S]-[ferredoxin] + 2 ATP + 2 H2O. It functions in the pathway porphyrin-containing compound metabolism; bacteriochlorophyll biosynthesis (light-independent). Component of the dark-operative protochlorophyllide reductase (DPOR) that uses Mg-ATP and reduced ferredoxin to reduce ring D of protochlorophyllide (Pchlide) to form chlorophyllide a (Chlide). This reaction is light-independent. The L component serves as a unique electron donor to the NB-component of the complex, and binds Mg-ATP. This chain is Light-independent protochlorophyllide reductase iron-sulfur ATP-binding protein, found in Rhodopseudomonas palustris (strain ATCC BAA-98 / CGA009).